The following is a 216-amino-acid chain: Pyridoxine/pyridoxamine 5'-phosphate oxidase (216 aa).

Residues 63 to 68, 78 to 79, Lys85, and Gln107 contribute to the FMN site; these read RMVLMK and YS. Lys68 contacts substrate. Substrate-binding residues include Tyr125 and Arg129. FMN is bound by residues 142–143 and Trp187; that span reads QS. A substrate-binding site is contributed by 193–195; the sequence is RLH. Arg197 contributes to the FMN binding site.

It belongs to the pyridoxamine 5'-phosphate oxidase family. Homodimer. It depends on FMN as a cofactor.

The catalysed reaction is pyridoxamine 5'-phosphate + O2 + H2O = pyridoxal 5'-phosphate + H2O2 + NH4(+). It catalyses the reaction pyridoxine 5'-phosphate + O2 = pyridoxal 5'-phosphate + H2O2. It participates in cofactor metabolism; pyridoxal 5'-phosphate salvage; pyridoxal 5'-phosphate from pyridoxamine 5'-phosphate: step 1/1. Its pathway is cofactor metabolism; pyridoxal 5'-phosphate salvage; pyridoxal 5'-phosphate from pyridoxine 5'-phosphate: step 1/1. Functionally, catalyzes the oxidation of either pyridoxine 5'-phosphate (PNP) or pyridoxamine 5'-phosphate (PMP) into pyridoxal 5'-phosphate (PLP). The sequence is that of Pyridoxine/pyridoxamine 5'-phosphate oxidase from Bradyrhizobium sp. (strain BTAi1 / ATCC BAA-1182).